Consider the following 152-residue polypeptide: Deoxyuridine 5'-triphosphate nucleotidohydrolase (152 aa).

Substrate-binding positions include 71 to 73, Asn84, 88 to 90, and Met98; these read RSG and LID.

This sequence belongs to the dUTPase family. Requires Mg(2+) as cofactor.

It catalyses the reaction dUTP + H2O = dUMP + diphosphate + H(+). Its pathway is pyrimidine metabolism; dUMP biosynthesis; dUMP from dCTP (dUTP route): step 2/2. This enzyme is involved in nucleotide metabolism: it produces dUMP, the immediate precursor of thymidine nucleotides and it decreases the intracellular concentration of dUTP so that uracil cannot be incorporated into DNA. In Aeromonas hydrophila subsp. hydrophila (strain ATCC 7966 / DSM 30187 / BCRC 13018 / CCUG 14551 / JCM 1027 / KCTC 2358 / NCIMB 9240 / NCTC 8049), this protein is Deoxyuridine 5'-triphosphate nucleotidohydrolase.